A 377-amino-acid chain; its full sequence is 5-hydroxytryptamine receptor 1D (377 aa).

The segment at 1–23 is disordered; the sequence is MSPLNQSAEGLPQEASNRSLNAT. Residues 1–38 are Extracellular-facing; sequence MSPLNQSAEGLPQEASNRSLNATETSEAWDPRTLQALK. Residues asparagine 5, asparagine 17, and asparagine 21 are each glycosylated (N-linked (GlcNAc...) asparagine). A helical membrane pass occupies residues 39–64; that stretch reads ISLAVVLSVITLATVLSNAFVLTTIL. The Cytoplasmic segment spans residues 65-75; the sequence is LTRKLHTPANY. A helical transmembrane segment spans residues 76 to 97; that stretch reads LIGSLATTDLLVSILVMPISIA. Over 98 to 109 the chain is Extracellular; the sequence is YTITHTWNFGQI. A helical transmembrane segment spans residues 110–134; it reads LCDIWLSSDITCCTASILHLCVIAL. Cysteine 111 and cysteine 188 are joined by a disulfide. Serotonin-binding residues include aspartate 118 and cysteine 122. Positions 135–137 match the DRY motif; important for ligand-induced conformation changes motif; sequence DRY. At 135 to 154 the chain is on the cytoplasmic side; it reads DRYWAITDALEYSKRRTAGH. A helical membrane pass occupies residues 155–176; sequence AATMIAIVWAISICISIPPLFW. Topologically, residues 177–194 are extracellular; sequence RQAKAQEEMSDCLVNTSQ. Residues 195–218 form a helical membrane-spanning segment; that stretch reads ISYTIYSTCGAFYIPSVLLIILYG. The Cytoplasmic portion of the chain corresponds to 219–300; that stretch reads RIYRAARNRI…ISAARERKAT (82 aa). Residues 301–326 form a helical membrane-spanning segment; that stretch reads KILGIILGAFIICWLPFFVVSLVLPI. Serine 321 is a serotonin binding site. Residues 327–335 are Extracellular-facing; it reads CRDSCWIHP. The chain crosses the membrane as a helical span at residues 336-359; sequence ALFDFFTWLGYLNSLINPIIYTVF. Positions 352–356 match the NPxxY motif; important for ligand-induced conformation changes and signaling motif; the sequence is NPIIY. Over 360–377 the chain is Cytoplasmic; sequence NEEFRQAFQKIVPFRKAS.

The protein belongs to the G-protein coupled receptor 1 family. As to quaternary structure, homodimer. Heterodimer with HTR1B. In terms of tissue distribution, detected in brain neocortex and caudate nucleus (at protein level).

It localises to the cell membrane. Functionally, G-protein coupled receptor for 5-hydroxytryptamine (serotonin). Also functions as a receptor for ergot alkaloid derivatives, various anxiolytic and antidepressant drugs and other psychoactive substances. Ligand binding causes a conformation change that triggers signaling via guanine nucleotide-binding proteins (G proteins) and modulates the activity of downstream effectors, such as adenylate cyclase. HTR1D is coupled to G(i)/G(o) G alpha proteins and mediates inhibitory neurotransmission by inhibiting adenylate cyclase activity. Regulates the release of 5-hydroxytryptamine in the brain, and thereby affects neural activity. May also play a role in regulating the release of other neurotransmitters. May play a role in vasoconstriction. The sequence is that of 5-hydroxytryptamine receptor 1D from Homo sapiens (Human).